Consider the following 461-residue polypeptide: Lysosomal proton-coupled steroid conjugate and bile acid symporter SLC46A3 (461 aa).

Positions 1–25 (MKILFVEPAIFLSAFAMTLTGPLTT) are cleaved as a signal peptide. Residues 26–73 (QYVYRRIWEETGNYTFSSDSNISECEKNKSSPIFAFQEEVQKKVSRFN) are Extracellular-facing. Residues Asn38, Asn46, and Asn53 are each glycosylated (N-linked (GlcNAc...) asparagine). A helical membrane pass occupies residues 74-94 (LQMDISGLIPGLVSTFILLSI). Residues 95 to 101 (SDHYGRK) are Cytoplasmic-facing. Residues 102 to 124 (FPMILSSVGALATSVWLCLLCYF) form a helical membrane-spanning segment. Residues 125–133 (AFPFQLLIA) are Extracellular-facing. Residues 134–156 (STFIGAFCGNYTTFWGACFAYIV) traverse the membrane as a helical segment. The Cytoplasmic segment spans residues 157–170 (DQCKEHKQKTIRIA). The chain crosses the membrane as a helical span at residues 171–191 (IIDFLLGLVTGLTGLSSGYFI). Topologically, residues 192 to 197 (RELGFE) are extracellular. A helical membrane pass occupies residues 198-218 (WSFLIIAVSLAVNLIYILFFL). Residues 219–261 (GDPVKECSSQNVTMSCSEGFKNLFYRTYMLFKNASGKRRFLLC) lie on the Cytoplasmic side of the membrane. A helical transmembrane segment spans residues 262–282 (LLLFTVITYFFVVIGIAPIFI). Over 283–294 (LYELDSPLCWNE) the chain is Extracellular. A helical transmembrane segment spans residues 295-315 (VFIGYGSALGSASFLTSFLGI). At 316-324 (WLFSYCMED) the chain is on the cytoplasmic side. The chain crosses the membrane as a helical span at residues 325-345 (IHMAFIGIFTTMTGMAMTAFA). The Extracellular portion of the chain corresponds to 346-347 (ST). The chain crosses the membrane as a helical span at residues 348 to 368 (TLMMFLARVPFLFTIVPFSVL). The Cytoplasmic segment spans residues 369–382 (RSMLSKVVRSTEQG). The chain crosses the membrane as a helical span at residues 383-403 (TLFACIAFLETLGGVTAVSTF). At 404–415 (NGIYSATVAWYP) the chain is on the extracellular side. Residues 416 to 436 (GFTFLLSAGLLLLPAISLCVV) traverse the membrane as a helical segment. The Cytoplasmic segment spans residues 437–461 (KCTSWNEGSYELLIQEESSEDASDR). The short motif at 446-449 (YELL) is the Tyrosine-based lysosomal-sorting motif element.

This sequence belongs to the major facilitator superfamily. SLC46A family.

It is found in the lysosome membrane. It carries out the reaction estrone 3-sulfate(out) + n H(+)(out) = estrone 3-sulfate(in) + n H(+)(in). The enzyme catalyses 25-hydroxyvitamin D3 sulfate(out) + n H(+)(out) = 25-hydroxyvitamin D3 sulfate(in) + n H(+)(in). The catalysed reaction is cholate(out) + n H(+)(out) = cholate(in) + n H(+)(in). It catalyses the reaction glycocholate(out) + n H(+)(out) = glycocholate(in) + n H(+)(in). It carries out the reaction taurocholate(out) + n H(+)(out) = taurocholate(in) + n H(+)(in). The enzyme catalyses dehydroepiandrosterone 3-sulfate(out) + n H(+)(out) = dehydroepiandrosterone 3-sulfate(in) + n H(+)(in). The catalysed reaction is N-acetyl-D-muramoyl-L-alanyl-D-isoglutamine(out) + n H(+)(out) = N-acetyl-D-muramoyl-L-alanyl-D-isoglutamine(in) + n H(+)(in). It catalyses the reaction 2',3'-cGAMP(out) + n H(+)(out) = 2',3'-cGAMP(in) + n H(+)(in). In terms of biological role, lysosomal proton-coupled steroid conjugate and bile acid transporter. Preferentially recognizes lipophilic steroid conjugates or bile acis as endogenous substrates and seems to mediate escape from lysosomes to the cytoplasm. Modulates hepatic cytosolic copper homeostasis, maybe acting as a lysosomal copper transporter and sequestering copper ions in the lysosome. Transports catabolites of non-cleavable antibody-drug conjugates from the lysosome to the cytoplasm. Delivers pathogen-associated molecular patterns to cytosolic pattern recognition receptors as part of the innate immune response to microbes. Selectively transports bacterial muramyl dipeptide (MDP) into the cytosol for recognition by NOD2, triggering inflammatory responses. Likely acts as a redundant importer of cyclic GMP-AMP dinucleotides (cGAMPs) in monocyte and macrophage cell lineages. The transport mechanism, its electrogenicity and stoichiometry remain to be elucidated. In Homo sapiens (Human), this protein is Lysosomal proton-coupled steroid conjugate and bile acid symporter SLC46A3.